Reading from the N-terminus, the 701-residue chain is MARKTPIKRYRNIGICAHVDAGKTTTTERILYYTGRSHKMGETHDGASTTDWMEQEQERGITITSAAVTTFWQGMDKQYPEHRINIIDTPGHVDFTIEVERSLRVLDGAVVVFCGSSGVEPQSETVWRQANKYEVPRMVFVNKMDRAGANFMRVVEQIRNRLGATTVPIQLPIGAEDDFEGIVDLLRMKAIYWNEADQGMTYELRDIPESMKAEAEKAREQMIEAAAEANEEYMDKYLEGEELTYEEIKKGLRDRTIANEIVLATCGSAFKNKGVQAVLDAVIEFLPAPDEVKAIRGEVDDEGTEETRPVDDDAPFAALAFKIATDPFVGTLTFFRVYSGKLESGNAVFNSVKGKKERVGRMVQMHANDREEIKEVLAGDIAAAIGLKNVTTGDTLCDENNKIVLERMEFPEPVISVAVEPKSKADQEKMGVALGKLAQEDPSFRVRTDEESGQTIISGMGELHLDIIVDRMRREFKVEANIGKPQVAYRECIRKPVDVEGKFVRQSGGRGQYGHVKVKLEPLPLDDEDGENFIFVNEIVGGVVPKEYIPAVQQGIEEQMQNGCLAGYPLLGIKATLYDGSYHDVDSNEMAFKIAGSMAMKKGALEANPALLEPIMKVEVVTPEDYMGDVVGDLNRRRGLVQGMDEGPAGKVIRAEVPLSEMFGYATDLRSATQGRASYAMEFSRYMEAPSNIAEAIIKKG.

One can recognise a tr-type G domain in the interval 8 to 290; that stretch reads KRYRNIGICA…AVIEFLPAPD (283 aa). Residues 17–24, 88–92, and 142–145 each bind GTP; these read AHVDAGKT, DTPGH, and NKMD.

This sequence belongs to the TRAFAC class translation factor GTPase superfamily. Classic translation factor GTPase family. EF-G/EF-2 subfamily.

The protein localises to the cytoplasm. Its function is as follows. Catalyzes the GTP-dependent ribosomal translocation step during translation elongation. During this step, the ribosome changes from the pre-translocational (PRE) to the post-translocational (POST) state as the newly formed A-site-bound peptidyl-tRNA and P-site-bound deacylated tRNA move to the P and E sites, respectively. Catalyzes the coordinated movement of the two tRNA molecules, the mRNA and conformational changes in the ribosome. This is Elongation factor G from Marinobacter nauticus (strain ATCC 700491 / DSM 11845 / VT8) (Marinobacter aquaeolei).